The sequence spans 236 residues: Protein-L-isoaspartate O-methyltransferase 1 (236 aa).

Serine 85 is a catalytic residue.

The protein belongs to the methyltransferase superfamily. L-isoaspartyl/D-aspartyl protein methyltransferase family.

It localises to the cytoplasm. The enzyme catalyses [protein]-L-isoaspartate + S-adenosyl-L-methionine = [protein]-L-isoaspartate alpha-methyl ester + S-adenosyl-L-homocysteine. Its function is as follows. Catalyzes the methyl esterification of L-isoaspartyl residues in peptides and proteins that result from spontaneous decomposition of normal L-aspartyl and L-asparaginyl residues. It plays a role in the repair and/or degradation of damaged proteins. The chain is Protein-L-isoaspartate O-methyltransferase 1 from Polaromonas sp. (strain JS666 / ATCC BAA-500).